The primary structure comprises 648 residues: 1-deoxy-D-xylulose-5-phosphate synthase (648 aa).

Thiamine diphosphate contacts are provided by residues His72 and 113-115 (GHA). Asp144 contributes to the Mg(2+) binding site. Thiamine diphosphate is bound by residues 145 to 146 (GA), Asn173, and Glu363. A Mg(2+)-binding site is contributed by Asn173.

It belongs to the transketolase family. DXPS subfamily. Homodimer. Mg(2+) serves as cofactor. It depends on thiamine diphosphate as a cofactor.

The catalysed reaction is D-glyceraldehyde 3-phosphate + pyruvate + H(+) = 1-deoxy-D-xylulose 5-phosphate + CO2. It participates in metabolic intermediate biosynthesis; 1-deoxy-D-xylulose 5-phosphate biosynthesis; 1-deoxy-D-xylulose 5-phosphate from D-glyceraldehyde 3-phosphate and pyruvate: step 1/1. Catalyzes the acyloin condensation reaction between C atoms 2 and 3 of pyruvate and glyceraldehyde 3-phosphate to yield 1-deoxy-D-xylulose-5-phosphate (DXP). The protein is 1-deoxy-D-xylulose-5-phosphate synthase of Symbiobacterium thermophilum (strain DSM 24528 / JCM 14929 / IAM 14863 / T).